A 260-amino-acid chain; its full sequence is Tryptophan synthase alpha chain (260 aa).

Active-site proton acceptor residues include glutamate 52 and aspartate 63.

This sequence belongs to the TrpA family. In terms of assembly, tetramer of two alpha and two beta chains.

It catalyses the reaction (1S,2R)-1-C-(indol-3-yl)glycerol 3-phosphate + L-serine = D-glyceraldehyde 3-phosphate + L-tryptophan + H2O. It participates in amino-acid biosynthesis; L-tryptophan biosynthesis; L-tryptophan from chorismate: step 5/5. Its function is as follows. The alpha subunit is responsible for the aldol cleavage of indoleglycerol phosphate to indole and glyceraldehyde 3-phosphate. This chain is Tryptophan synthase alpha chain, found in Streptococcus thermophilus (strain ATCC BAA-250 / LMG 18311).